Here is a 90-residue protein sequence, read N- to C-terminus: Small ribosomal subunit protein bS18 (90 aa).

The protein belongs to the bacterial ribosomal protein bS18 family. As to quaternary structure, part of the 30S ribosomal subunit. Forms a tight heterodimer with protein bS6.

Binds as a heterodimer with protein bS6 to the central domain of the 16S rRNA, where it helps stabilize the platform of the 30S subunit. This is Small ribosomal subunit protein bS18 from Bordetella petrii (strain ATCC BAA-461 / DSM 12804 / CCUG 43448).